We begin with the raw amino-acid sequence, 80 residues long: Small ribosomal subunit protein bS21 (80 aa).

The protein belongs to the bacterial ribosomal protein bS21 family.

This Rhodospirillum rubrum (strain ATCC 11170 / ATH 1.1.1 / DSM 467 / LMG 4362 / NCIMB 8255 / S1) protein is Small ribosomal subunit protein bS21.